The chain runs to 458 residues: F-box/WD repeat-containing protein 9 (458 aa).

Met1 carries the post-translational modification N-acetylmethionine. 2 disordered regions span residues 1–30 (MELP…DAQA) and 42–64 (KSGL…SASE). Over residues 16 to 26 (DDSDPESETDP) the composition is skewed to acidic residues. The residue at position 18 (Ser18) is a Phosphoserine. The residue at position 55 (Thr55) is a Phosphothreonine. Ser59 bears the Phosphoserine mark. Residues 76–123 (EPGLLSLPPELLLEICSYLDARLVLHVLSRVCHALRDLVSDHVTWRLR) enclose the F-box domain. 7 WD repeats span residues 171–210 (GHVA…TESN), 220–261 (KRNS…QQFG), 264–301 (KASS…ALLK), 305–342 (LHSR…VLQR), 344–381 (QLDS…FQLI), 387–424 (GHSF…RTIC), and 427–458 (RHDN…RLQA).

Interacts with SKP1 and CUL1.

In terms of biological role, substrate-recognition component of the SCF (SKP1-CUL1-F-box protein)-type E3 ubiquitin ligase complex. The sequence is that of F-box/WD repeat-containing protein 9 (FBXW9) from Homo sapiens (Human).